A 360-amino-acid chain; its full sequence is MTAKTPLHTTHLACGAKMVDFHGWDMPLHYGSQLNEHHAVRNDAGMFDVSHMTIVDILGAGGRQFLRKLLTNDVDQITHNGKALYSCMCNEHGGIIDDLIVYQRASDNYRVVLNSATRQNDVAWIRAKSEGFAVGLQERRELSMLAVQGPNAIAKTLSILAPAHVDAVSTLTSFECVDVDHWFFARTGYTGEDGLEIIVPNEFVTQLWNDLLHAGVTPCGLGARDTLRLEAGMLLYGQDMDETTTPLESGLAWTVKWEPEDRGFIGMGALVSQKQQGIKRKMVGLTLLDKGIMRHGQKVIIEGCPDGIITSGSYSPTLQQSIALARVPMETGEQVLVDIRGKLIPAKVGKPRFIKQGKPV.

Belongs to the GcvT family. As to quaternary structure, the glycine cleavage system is composed of four proteins: P, T, L and H.

The enzyme catalyses N(6)-[(R)-S(8)-aminomethyldihydrolipoyl]-L-lysyl-[protein] + (6S)-5,6,7,8-tetrahydrofolate = N(6)-[(R)-dihydrolipoyl]-L-lysyl-[protein] + (6R)-5,10-methylene-5,6,7,8-tetrahydrofolate + NH4(+). The glycine cleavage system catalyzes the degradation of glycine. In Legionella pneumophila subsp. pneumophila (strain Philadelphia 1 / ATCC 33152 / DSM 7513), this protein is Aminomethyltransferase.